We begin with the raw amino-acid sequence, 157 residues long: 6,7-dimethyl-8-ribityllumazine synthase (157 aa).

5-amino-6-(D-ribitylamino)uracil is bound by residues tryptophan 27, 59 to 61 (AIE), and 81 to 83 (VVI). 86-87 (ET) contributes to the (2S)-2-hydroxy-3-oxobutyl phosphate binding site. Residue histidine 89 is the Proton donor of the active site. Asparagine 114 contributes to the 5-amino-6-(D-ribitylamino)uracil binding site. Arginine 128 is a (2S)-2-hydroxy-3-oxobutyl phosphate binding site.

Belongs to the DMRL synthase family. In terms of assembly, homopentamer.

The enzyme catalyses (2S)-2-hydroxy-3-oxobutyl phosphate + 5-amino-6-(D-ribitylamino)uracil = 6,7-dimethyl-8-(1-D-ribityl)lumazine + phosphate + 2 H2O + H(+). Its pathway is cofactor biosynthesis; riboflavin biosynthesis; riboflavin from 2-hydroxy-3-oxobutyl phosphate and 5-amino-6-(D-ribitylamino)uracil: step 1/2. In terms of biological role, catalyzes the formation of 6,7-dimethyl-8-ribityllumazine by condensation of 5-amino-6-(D-ribitylamino)uracil with 3,4-dihydroxy-2-butanone 4-phosphate. This is the penultimate step in the biosynthesis of riboflavin. The protein is 6,7-dimethyl-8-ribityllumazine synthase of Mycolicibacterium vanbaalenii (strain DSM 7251 / JCM 13017 / BCRC 16820 / KCTC 9966 / NRRL B-24157 / PYR-1) (Mycobacterium vanbaalenii).